The primary structure comprises 400 residues: Integumentary mucin A.1 (400 aa).

Positions 1 to 20 (MKHIILCIHFLLMVVGLGQA) are cleaved as a signal peptide. 2 P-type domains span residues 21–64 (QDCS…FYNA) and 72–115 (LECS…YART). Cystine bridges form between Cys-23–Cys-49, Cys-33–Cys-48, and Cys-43–Cys-60. Residue Asn-63 is glycosylated (N-linked (GlcNAc...) asparagine). 3 cysteine pairs are disulfide-bonded: Cys-74–Cys-100, Cys-84–Cys-99, and Cys-94–Cys-111. 2 stretches are compositionally biased toward low complexity: residues 122 to 264 (PDTT…DTTP) and 272 to 299 (ETTTETTTETTTETTTETTTETTTETTT). A disordered region spans residues 122–302 (PDTTTASTTA…TTTETTTAPP (181 aa)). 14 tandem repeats follow at residues 127–135 (ASTTAETTT), 136–144 (VPTTPETTT), 145–153 (VPTTPETTT), 154–162 (VPTTPETTT), 163–171 (VPTTPETTT), 172–180 (VPTTPETTT), 181–189 (VPTTPETTT), 190–198 (VPTTPETTT), 199–207 (VPTTPETTT), 208–216 (VPTTPETTT), 217–225 (VPTTPETTT), 226–234 (VPTTPETTT), 235–243 (ASTTAETTT), and 244–252 (VPTTPETTT). Positions 127-261 (ASTTAETTTV…TEPTTTPTTD (135 aa)) are 15 X 9 AA approximate tandem repeats of [AV]-[SP]-T-T-[AP]-E-T-T-T. A 1-15; approximate repeat occupies 253 to 261 (EPTTTPTTD). 7 repeat units span residues 272–275 (ETTT), 276–279 (ETTT), 280–283 (ETTT), 284–287 (ETTT), 288–291 (ETTT), 292–295 (ETTT), and 296–299 (ETTT). Positions 272–299 (ETTTETTTETTTETTTETTTETTTETTT) are 7 X 4 AA repeats of E-T-T-T. 2 P-type domains span residues 298–343 (TTAP…FYTE) and 351–394 (AECT…FEKA). 5 disulfide bridges follow: Cys-312–Cys-327, Cys-322–Cys-339, Cys-353–Cys-379, Cys-363–Cys-378, and Cys-373–Cys-390.

In terms of processing, extensively O-glycosylated. Consist of about 70% carbohydrate and 30% protein. As to expression, expressed and stored exclusively in mature mucous glands of the skin.

It is found in the secreted. Could be involved in defense against microbial infections. Protects the epithelia from external environment. The polypeptide is Integumentary mucin A.1 (Xenopus laevis (African clawed frog)).